Consider the following 167-residue polypeptide: NADH-quinone oxidoreductase subunit B (167 aa).

Residues C40, C41, C105, and C134 each contribute to the [4Fe-4S] cluster site.

The protein belongs to the complex I 20 kDa subunit family. NDH-1 is composed of 14 different subunits. Subunits NuoB, C, D, E, F, and G constitute the peripheral sector of the complex. It depends on [4Fe-4S] cluster as a cofactor.

It localises to the cell inner membrane. The enzyme catalyses a quinone + NADH + 5 H(+)(in) = a quinol + NAD(+) + 4 H(+)(out). Its function is as follows. NDH-1 shuttles electrons from NADH, via FMN and iron-sulfur (Fe-S) centers, to quinones in the respiratory chain. The immediate electron acceptor for the enzyme in this species is believed to be ubiquinone. Couples the redox reaction to proton translocation (for every two electrons transferred, four hydrogen ions are translocated across the cytoplasmic membrane), and thus conserves the redox energy in a proton gradient. The protein is NADH-quinone oxidoreductase subunit B of Campylobacter jejuni (strain RM1221).